A 279-amino-acid polypeptide reads, in one-letter code: MSHYDQQYNAIIQKIIESGISDEEYQVRTKWDSDGTPAHTLSIMSEKMRFDNSEVPILTTKKVAWKTAIKELLWIWQLKSNDVQVLNDMGVHIWDQWRLEDGTIGAAYGYQLGKKNRTVNGQKVDQVDYLLHQLKHNPSSRRHLTMLWNPDDLDGMALTPCVYETQWYVKEGKLSLEVRARSNDMALGNPFNVFQYNVLQRMIAQVLGYELGEYIFNIGDCHIYTRHIDNLNIQMKREQYEAPKLWINPDIKNFYDFTIDDFKLIDYKHGDKLTFEVAV.

141–142 (RR) is a binding site for dUMP. Cys-161 acts as the Nucleophile in catalysis. Residues 181–184 (RSND), Asn-192, and 222–224 (HIY) each bind dUMP. Asp-184 contacts (6R)-5,10-methylene-5,6,7,8-tetrahydrofolate. Residue Ala-278 coordinates (6R)-5,10-methylene-5,6,7,8-tetrahydrofolate.

This sequence belongs to the thymidylate synthase family. Bacterial-type ThyA subfamily. In terms of assembly, homodimer.

Its subcellular location is the cytoplasm. It carries out the reaction dUMP + (6R)-5,10-methylene-5,6,7,8-tetrahydrofolate = 7,8-dihydrofolate + dTMP. It functions in the pathway pyrimidine metabolism; dTTP biosynthesis. Catalyzes the reductive methylation of 2'-deoxyuridine-5'-monophosphate (dUMP) to 2'-deoxythymidine-5'-monophosphate (dTMP) while utilizing 5,10-methylenetetrahydrofolate (mTHF) as the methyl donor and reductant in the reaction, yielding dihydrofolate (DHF) as a by-product. This enzymatic reaction provides an intracellular de novo source of dTMP, an essential precursor for DNA biosynthesis. The polypeptide is Thymidylate synthase (Bacillus licheniformis (strain ATCC 14580 / DSM 13 / JCM 2505 / CCUG 7422 / NBRC 12200 / NCIMB 9375 / NCTC 10341 / NRRL NRS-1264 / Gibson 46)).